The following is a 331-amino-acid chain: Cytochrome bo(3) ubiquinol oxidase subunit 2 (331 aa).

The first 23 residues, Met-1–Gly-23, serve as a signal peptide directing secretion. Cys-24 carries the N-palmitoyl cysteine lipid modification. Cys-24 carries the S-diacylglycerol cysteine lipid modification. At Cys-24–Thr-41 the chain is on the periplasmic side. A helical membrane pass occupies residues Leu-42 to Leu-62. Residues Ala-63 to Arg-86 lie on the Cytoplasmic side of the membrane. A helical transmembrane segment spans residues Ile-87 to Trp-107. The Periplasmic portion of the chain corresponds to Glu-108–Glu-331.

Belongs to the cytochrome c oxidase subunit 2 family. In terms of assembly, heterooctamer of two A chains, two B chains, two C chains and two D chains.

The protein localises to the cell inner membrane. Functionally, cytochrome bo(3) ubiquinol terminal oxidase is the component of the aerobic respiratory chain of E.coli that predominates when cells are grown at high aeration. Has proton pump activity across the membrane in addition to electron transfer, pumping 2 protons/electron. This Pseudomonas aeruginosa (strain ATCC 15692 / DSM 22644 / CIP 104116 / JCM 14847 / LMG 12228 / 1C / PRS 101 / PAO1) protein is Cytochrome bo(3) ubiquinol oxidase subunit 2 (cyoA).